Reading from the N-terminus, the 90-residue chain is Antitoxin VapB35 (90 aa).

Residues 53–90 are disordered; that stretch reads GSVQPARVHGPAPRPTIPMRGGLDSGTLLERMRAEERY.

The protein belongs to the phD/YefM antitoxin family.

Functionally, antitoxin component of a type II toxin-antitoxin (TA) system. Neutralizes the effect of cognate toxin VapC35. The polypeptide is Antitoxin VapB35 (vapB35) (Mycobacterium tuberculosis (strain CDC 1551 / Oshkosh)).